We begin with the raw amino-acid sequence, 86 residues long: Small ribosomal subunit protein bS20 (86 aa).

This sequence belongs to the bacterial ribosomal protein bS20 family.

Binds directly to 16S ribosomal RNA. This chain is Small ribosomal subunit protein bS20, found in Rhodococcus opacus (strain B4).